The primary structure comprises 281 residues: MNLLLAEVAQATQRLADAGVPSPRTDAEELAAYLHGVKRGELHTVPDADFDARYWEVVARREAREPLQHITGRAYFRYLELQVGPGVFVPRPETESVVGWAIDAVRAMDVVEPCIVDLCTGSGAIALALAQEVPRSRVHAVELSEDALKWTRRNMEGSRVDLRQGDALTAFPDLDGQVDLVVSNPPYIPLTEWEYVAPEARDHDPELALFSGEDGLDLIRGLERTAHRLLRPGGVVVVEHADTQGGQVPWIFTEERGWADAADHPDLNNRPRFATARKALP.

S-adenosyl-L-methionine-binding residues include glutamate 142 and asparagine 184. 184–187 provides a ligand contact to substrate; that stretch reads NPPY. Residues 261 to 281 form a disordered region; that stretch reads AADHPDLNNRPRFATARKALP.

Belongs to the protein N5-glutamine methyltransferase family. PrmC subfamily.

It carries out the reaction L-glutaminyl-[peptide chain release factor] + S-adenosyl-L-methionine = N(5)-methyl-L-glutaminyl-[peptide chain release factor] + S-adenosyl-L-homocysteine + H(+). Functionally, methylates the class 1 translation termination release factors RF1/PrfA and RF2/PrfB on the glutamine residue of the universally conserved GGQ motif. The chain is Release factor glutamine methyltransferase from Streptomyces coelicolor (strain ATCC BAA-471 / A3(2) / M145).